Reading from the N-terminus, the 188-residue chain is uncharacterized protein (188 aa).

A disordered region spans residues 121–142; sequence ADTLSRKNKRSSDQKRNGQHFE. Residues 130-142 are compositionally biased toward basic and acidic residues; sequence RSSDQKRNGQHFE.

Belongs to the chlamydial CPn_0422/CT_273/TC_0545 family.

This is an uncharacterized protein from Chlamydia trachomatis serovar D (strain ATCC VR-885 / DSM 19411 / UW-3/Cx).